We begin with the raw amino-acid sequence, 575 residues long: Thrombomodulin (575 aa).

The N-terminal stretch at 1-18 (MLGVLVLGALALAGLGFP) is a signal peptide. Residues 19–515 (APAEPQPGGS…TPPAVGLVHS (497 aa)) are Extracellular-facing. A C-type lectin domain is found at 31–169 (VEHDCFALYP…VKADGFLCEF (139 aa)). Asn-47, Asn-115, and Asn-116 each carry an N-linked (GlcNAc...) asparagine glycan. Cystine bridges form between Cys-137-Cys-158, Cys-245-Cys-256, Cys-252-Cys-265, Cys-267-Cys-280, Cys-288-Cys-296, Cys-292-Cys-308, Cys-310-Cys-323, Cys-329-Cys-340, Cys-336-Cys-349, Cys-351-Cys-362, Cys-369-Cys-378, Cys-374-Cys-388, Cys-390-Cys-404, Cys-408-Cys-413, Cys-417-Cys-425, Cys-427-Cys-439, Cys-445-Cys-455, Cys-451-Cys-464, and Cys-466-Cys-480. 2 consecutive EGF-like domains span residues 241 to 281 (GAWD…RSCT) and 284 to 324 (ATQS…HRCE). Positions 325 to 363 (DVDDCILEPSPCPQRCVNTQGGFECHCYPNYDLVDGECV) constitute an EGF-like 3; calcium-binding domain. Asn-342 bears the (3R)-3-hydroxyasparagine mark. 2 EGF-like domains span residues 365-405 (PVDP…HRCQ) and 404-440 (CQMFCNQTACPADCDPNTQASCECPEGYILDDGFICT). Asn-382 carries an N-linked (GlcNAc...) asparagine glycan. Asn-409 is a glycosylation site (N-linked (GlcNAc...) asparagine). Residues 441–481 (DIDECENGGFCSGVCHNLPGTFECICGPDSALARHIGTDCD) form the EGF-like 6; calcium-binding domain. An involved in alpha-L/beta-2 and alpha-M/beta-2 integrin binding region spans residues 481-515 (DSGKVDGGDSGSGEPPPSPTPGSTLTPPAVGLVHS). The segment at 484 to 506 (KVDGGDSGSGEPPPSPTPGSTLT) is disordered. O-linked (Xyl...) (chondroitin sulfate) serine glycosylation is found at Ser-490 and Ser-492. Residues 516–539 (GLLIGISIASLCLVVALLALLCHL) form a helical membrane-spanning segment. Residues 540 to 575 (RKKQGAARAKMEYKCAAPSKEVVLQHVRTERTPQRL) lie on the Cytoplasmic side of the membrane.

Interacts with ITGAL, ITGAM and ITGB2. Interacts with thrombin/F2; this interaction switches the specificity of thrombin from a procoagulant to an anticoagulant and antifibrinolytic protease. Interacts with ANGP1 and ANGP2; these interactions significantly inhibit the generation of activated PC and TAFIa/CPB2 by the thrombin/thrombomodulin complex. Interacts with PF4; this interaction enhances generation of activated protein C. Interacts with HMGB1; this interaction inhibits HMGB1 inflammatory activity. In terms of processing, N-glycosylated. Post-translationally, the iron and 2-oxoglutarate dependent 3-hydroxylation of aspartate and asparagine is (R) stereospecific within EGF domains. In terms of tissue distribution, endothelial cells are unique in synthesizing thrombomodulin.

The protein localises to the membrane. Functionally, endothelial cell receptor that plays a critical role in regulating several physiological processes including hemostasis, coagulation, fibrinolysis, inflammation, and angiogenesis. Acts as a cofactor for thrombin activation of protein C/PROC on the surface of vascular endothelial cells leading to initiation of the activated protein C anticoagulant pathway. Also accelerates the activation of the plasma carboxypeptidase B2/CPB2, which catalyzes removal of C-terminal basic amino acids from its substrates including kinins or anaphylatoxins leading to fibrinolysis inhibition. Plays critical protective roles in changing the cleavage specificity of protease-activated receptor 1/PAR1, inhibiting endothelial cell permeability and inflammation. Suppresses inflammation distinctly from its anticoagulant cofactor activity by sequestering HMGB1 thereby preventing it from engaging cellular receptors such as RAGE and contributing to the inflammatory response. This chain is Thrombomodulin (THBD), found in Homo sapiens (Human).